We begin with the raw amino-acid sequence, 458 residues long: PH domain-containing protein DDB_G0274775 (458 aa).

One can recognise a PH domain in the interval 15 to 112 (PSDREGWLTK…WMESIKRNLD (98 aa)). A disordered region spans residues 111–154 (LDGEGGMKSGGNDIVSSPKINSEPTPKVNQNGSAPEKSSLSSPR). Over residues 124-142 (IVSSPKINSEPTPKVNQNG) the composition is skewed to polar residues. The segment covering 143–154 (SAPEKSSLSSPR) has biased composition (low complexity).

This chain is PH domain-containing protein DDB_G0274775, found in Dictyostelium discoideum (Social amoeba).